The primary structure comprises 95 residues: Co-chaperonin GroES (95 aa).

This sequence belongs to the GroES chaperonin family. In terms of assembly, heptamer of 7 subunits arranged in a ring. Interacts with the chaperonin GroEL.

The protein localises to the cytoplasm. Its function is as follows. Together with the chaperonin GroEL, plays an essential role in assisting protein folding. The GroEL-GroES system forms a nano-cage that allows encapsulation of the non-native substrate proteins and provides a physical environment optimized to promote and accelerate protein folding. GroES binds to the apical surface of the GroEL ring, thereby capping the opening of the GroEL channel. The polypeptide is Co-chaperonin GroES (Rickettsia typhi (strain ATCC VR-144 / Wilmington)).